The sequence spans 243 residues: Thaumatin-like protein (243 aa).

An N-terminal signal peptide occupies residues 1-20; that stretch reads MASINLFLFAFLLLLSHASA. Disulfide bonds link C29/C238, C77/C87, C92/C98, C144/C228, C149/C211, C157/C174, C178/C187, and C188/C198.

This sequence belongs to the thaumatin family.

This is Thaumatin-like protein from Arabidopsis thaliana (Mouse-ear cress).